We begin with the raw amino-acid sequence, 464 residues long: Protein FAM90A3 (464 aa).

Disordered regions lie at residues methionine 1 to leucine 42, proline 70 to alanine 389, and alanine 411 to proline 437. 2 stretches are compositionally biased toward basic and acidic residues: residues glycine 74–valine 89 and asparagine 97–arginine 114. The segment covering leucine 180–leucine 197 has biased composition (low complexity).

The protein belongs to the FAM90 family.

The chain is Protein FAM90A3 from Homo sapiens (Human).